Consider the following 290-residue polypeptide: Elongation factor Ts (290 aa).

Residues 83 to 86 form an involved in Mg(2+) ion dislocation from EF-Tu region; it reads TDFV.

This sequence belongs to the EF-Ts family.

Its subcellular location is the cytoplasm. Associates with the EF-Tu.GDP complex and induces the exchange of GDP to GTP. It remains bound to the aminoacyl-tRNA.EF-Tu.GTP complex up to the GTP hydrolysis stage on the ribosome. The chain is Elongation factor Ts (tsf) from Aquifex aeolicus (strain VF5).